Here is a 440-residue protein sequence, read N- to C-terminus: 2-methylisoborneol synthase (440 aa).

The disordered stretch occupies residues 1–116 (MPDSGPLGPH…SPAPAEPAAG (116 aa)). Residues 17-27 (TPATTVPDAPA) are compositionally biased toward low complexity. Pro residues predominate over residues 48-58 (PPVPIPSPSPP). Residues 59–75 (SGSASAAADTPDATTVG) show a composition bias toward low complexity. A compositionally biased stretch (pro residues) spans 102 to 111 (PSLPGSPAPA). The Mg(2+) site is built by D197, D198, E202, N345, S349, and E353.

Belongs to the terpene synthase family. 2-methylisoborneol synthase subfamily. Requires Mg(2+) as cofactor.

It carries out the reaction (E)-2-methylgeranyl diphosphate + H2O = 2-methylisoborneol + diphosphate. In terms of biological role, catalyzes the cyclization of 2-methylgeranyl diphosphate (2-MeGPP) to 2-methylisoborneol (2-MIB), which likely involves the intermediacy of 2-methyllinalyl diphosphate. This is 2-methylisoborneol synthase from Streptomyces ambofaciens (strain ATCC 23877 / 3486 / DSM 40053 / JCM 4204 / NBRC 12836 / NRRL B-2516).